A 94-amino-acid chain; its full sequence is Small ribosomal subunit protein bS18 (94 aa).

It belongs to the bacterial ribosomal protein bS18 family. Part of the 30S ribosomal subunit. Forms a tight heterodimer with protein bS6.

In terms of biological role, binds as a heterodimer with protein bS6 to the central domain of the 16S rRNA, where it helps stabilize the platform of the 30S subunit. In Polaromonas naphthalenivorans (strain CJ2), this protein is Small ribosomal subunit protein bS18.